A 134-amino-acid chain; its full sequence is Small ribosomal subunit protein uS11 (134 aa).

It belongs to the universal ribosomal protein uS11 family. In terms of assembly, part of the 30S ribosomal subunit. Interacts with proteins S7 and S18. Binds to IF-3.

Its function is as follows. Located on the platform of the 30S subunit, it bridges several disparate RNA helices of the 16S rRNA. Forms part of the Shine-Dalgarno cleft in the 70S ribosome. This is Small ribosomal subunit protein uS11 from Micrococcus luteus (strain ATCC 4698 / DSM 20030 / JCM 1464 / CCM 169 / CCUG 5858 / IAM 1056 / NBRC 3333 / NCIMB 9278 / NCTC 2665 / VKM Ac-2230) (Micrococcus lysodeikticus).